A 166-amino-acid chain; its full sequence is uncharacterized protein (166 aa).

Pentapeptide repeat domains follow at residues 38 to 77 (GECL…NLRR), 78 to 117 (ALLD…NLER), and 118 to 157 (SFLR…EFWE).

This is an uncharacterized protein from Synechocystis sp. (strain ATCC 27184 / PCC 6803 / Kazusa).